The primary structure comprises 407 residues: E3 ubiquitin-protein ligase TRIM13 (407 aa).

The segment at Cys10–Arg58 adopts an RING-type zinc-finger fold. Residues Pro89 to Ile131 form a B box-type zinc finger. Residues Cys94, His97, Cys117, and His123 each coordinate Zn(2+). A coiled-coil region spans residues Leu172–Ile200. A helical membrane pass occupies residues Leu317–Glu337.

It belongs to the TRIM/RBCC family. Interacts (via C-terminal domain) with VCP. Interacts with AKT1; the interaction ubiquitinates AKT1 and leads to its proteasomal degradation. Interacts with MDM2; the interaction ubiquitinates AKT1 and leads to its proteasomal degradation. Interacts with p62/SQSTM1. Interacts with TRAF6. Interacts with IKBKG/NEMO. Post-translationally, auto-ubiquitinated; requires the RING-type zinc finger. Auto-polyubiquitination leads to proteasomal degradation.

Its subcellular location is the endoplasmic reticulum membrane. It catalyses the reaction S-ubiquitinyl-[E2 ubiquitin-conjugating enzyme]-L-cysteine + [acceptor protein]-L-lysine = [E2 ubiquitin-conjugating enzyme]-L-cysteine + N(6)-ubiquitinyl-[acceptor protein]-L-lysine.. The protein operates within protein modification; protein ubiquitination. Its function is as follows. Endoplasmic reticulum (ER) membrane anchored E3 ligase involved in the retrotranslocation and turnover of membrane and secretory proteins from the ER through a set of processes named ER-associated degradation (ERAD). This process acts on misfolded proteins as well as in the regulated degradation of correctly folded proteins. Enhances ionizing radiation-induced p53/TP53 stability and apoptosis via ubiquitinating MDM2 and AKT1 and decreasing AKT1 kinase activity through MDM2 and AKT1 proteasomal degradation. Regulates ER stress-induced autophagy, and may act as a tumor suppressor. Also plays a role in innate immune response by stimulating NF-kappa-B activity in the TLR2 signaling pathway. Ubiquitinates TRAF6 via the 'Lys-29'-linked polyubiquitination chain resulting in NF-kappa-B activation. Participates as well in T-cell receptor-mediated NF-kappa-B activation. In the presence of TNF, modulates the IKK complex by regulating IKBKG/NEMO ubiquitination leading to the repression of NF-kappa-B. The protein is E3 ubiquitin-protein ligase TRIM13 (TRIM13) of Homo sapiens (Human).